The sequence spans 565 residues: Calcium-dependent protein kinase 21 (565 aa).

The N-myristoyl glycine moiety is linked to residue Gly2. Positions 28-55 are disordered; that stretch reads PVPDAEAASPRKDGVDGDGDDVRGGGGG. Positions 36 to 50 are enriched in basic and acidic residues; that stretch reads SPRKDGVDGDGDDVR. One can recognise a Protein kinase domain in the interval 77–358; the sequence is YVLGKELGRG…AKQVLEHPWL (282 aa). Residues 83 to 91 and Lys106 contribute to the ATP site; that span reads LGRGEFGVT. Asp224 acts as the Proton acceptor in catalysis. An autoinhibitory domain region spans residues 364-394; it reads APNVSLGDAVRARLQQFSAMNKFKKKALGVV. EF-hand domains follow at residues 401-436, 437-472, 473-500, and 504-539; these read EEVD…NGQP, VPEP…LKKM, SNDE…ELRE, and PNEQ…GADW. Residues Asp414, Asp416, Asn418, His420, Glu425, Asp450, Asp452, Asn454, Thr456, Glu461, Asp486, Asp488, Ser490, Glu497, Asp517, Asp519, Asp521, Arg523, and Glu528 each coordinate Ca(2+).

This sequence belongs to the protein kinase superfamily. Ser/Thr protein kinase family. CDPK subfamily. In terms of tissue distribution, expressed in spikelets and developing seeds.

It is found in the membrane. The enzyme catalyses L-seryl-[protein] + ATP = O-phospho-L-seryl-[protein] + ADP + H(+). The catalysed reaction is L-threonyl-[protein] + ATP = O-phospho-L-threonyl-[protein] + ADP + H(+). With respect to regulation, activated by calcium. Autophosphorylation may play an important role in the regulation of the kinase activity. Functionally, may play a role in signal transduction pathways that involve calcium as a second messenger. Functions in signal transduction pathways that positively regulate responses to abscisic acid (ABA) and salt stress. This is Calcium-dependent protein kinase 21 from Oryza sativa subsp. japonica (Rice).